Here is a 345-residue protein sequence, read N- to C-terminus: MKVAVLPGDGIGPEVTEAALKVLRALDEAEGLGLAYEVFPFGGAAIDAFGEPFPEPTRKGVEEAEAVLLGSVGGPKWDGLPRKIRPETGLLSLRKSQDLFANLRPAKVFPGLERLSPLKEEIARGVDVLIVRELTGGIYFGEPRGMSEAEAWNTERYSKPEVERVARVAFEAARKRRKHVVSVDKANVLEVGEFWRKTVEEVGRGYPDVALEHQYVDAMAMHLVRSPARFDVVVTGNIFGDILSDLASVLPGSLGLLPSASLGRGTPVFEPVHGSAPDIAGKGIANPTAAILSAAMMLEHAFGLVELARKVEDAVAKALLETPPPDLGGSAGTEAFTATVLRHLA.

NAD(+) is bound at residue 74 to 87; that stretch reads GPKWDGLPRKIRPE. Arg-94, Arg-104, Arg-132, and Asp-217 together coordinate substrate. The Mg(2+) site is built by Asp-217, Asp-241, and Asp-245. Position 274 to 286 (274 to 286) interacts with NAD(+); sequence GSAPDIAGKGIAN.

Belongs to the isocitrate and isopropylmalate dehydrogenases family. LeuB type 1 subfamily. As to quaternary structure, homodimer. It depends on Mg(2+) as a cofactor. Requires Mn(2+) as cofactor.

It is found in the cytoplasm. It catalyses the reaction (2R,3S)-3-isopropylmalate + NAD(+) = 4-methyl-2-oxopentanoate + CO2 + NADH. It participates in amino-acid biosynthesis; L-leucine biosynthesis; L-leucine from 3-methyl-2-oxobutanoate: step 3/4. Catalyzes the oxidation of 3-carboxy-2-hydroxy-4-methylpentanoate (3-isopropylmalate) to 3-carboxy-4-methyl-2-oxopentanoate. The product decarboxylates to 4-methyl-2 oxopentanoate. This is 3-isopropylmalate dehydrogenase (leuB) from Thermus thermophilus (strain ATCC 27634 / DSM 579 / HB8).